A 429-amino-acid polypeptide reads, in one-letter code: Glutamate--tRNA ligase 1 (429 aa).

The short motif at 6–16 (PSPTGDMHIGN) is the 'HIGH' region element. Residues 235–239 (KMSKR) carry the 'KMSKS' region motif. Residue Lys-238 coordinates ATP.

This sequence belongs to the class-I aminoacyl-tRNA synthetase family. Glutamate--tRNA ligase type 1 subfamily. In terms of assembly, monomer.

The protein resides in the cytoplasm. It carries out the reaction tRNA(Glu) + L-glutamate + ATP = L-glutamyl-tRNA(Glu) + AMP + diphosphate. In terms of biological role, catalyzes the attachment of glutamate to tRNA(Glu) in a two-step reaction: glutamate is first activated by ATP to form Glu-AMP and then transferred to the acceptor end of tRNA(Glu). In Campylobacter fetus subsp. fetus (strain 82-40), this protein is Glutamate--tRNA ligase 1.